The following is a 721-amino-acid chain: MASFKGFSANTVPVSKAKRDISSLAATPGLRSQSFTPSVDMSQSREFLTKAIEQGSMSIPYQHVNVPKVDRKVVSLVVRPFSSGAFSISGVISPAHAYLLECLPQLEQAMAFVASPESFQASDVAKRFAIKPGMSLQDAITAFINFVSAMLKMTVTRQNFDVIVAEIERLASTSVSVRTEEAKVADEELMLFGLDHRGPQLVDVSDAKGIMKAADIQTTHDVHLAPGVGNIDPEIYNEGRFMFMQHKPLAADQSYFTLETADYFKIYPTYDEHDGRMADQKQSGLILCTKDEVLAEQTIFKLDAPDDKTVHLLDRDDDHVVARFTKVFIEDVAPGHHAAQRSGQRSVLDDLYANTQVISITSAALKWVVKHGVSDGIVNRKNVKVCVGFDPLYTLSTHNGVSLCALLMDEKLSVLNSACRMTLRSLMKTGRDVDAHRAFQRVLSQGYTSLMCYYHPSRKLAYGEVLFLERSNDVTDGIKLQLDASRQCHECPVLQQKVVELEKQIIMQKSIQSDPTPVALQPLLSQLRELSSEVTRLQMELSRAQSLNAQLEADVKSAQSCSLDMYLRHHTCINGHAKEDELLDAVRVAPDVRREIMEKRSEVRQGWCERISKEAAAKCQTVIDDLTLMNGKQAQEITELRDSAEKYEKQIAELVSTITQNQITYQQELQALVAKNVELDALNQRQAKSLRITPSLLSATPIDSVDDVADLIDFSVPTDEL.

The interaction with sigma-NS stretch occupies residues Met-1–Pro-13. The segment at Met-1–Ser-38 is RNA-binding. Residues Val-14 to Asp-40 form an interaction with mu-2 region. The segment at Ser-471–Leu-721 is involved in the formation of factory-like inclusions. Coiled-coil stretches lie at residues Pro-522–Gln-559 and Leu-628–Gln-684.

The protein belongs to the orthoreovirus mu-NS protein family. Interacts with mu-2. Interacts with sigma-NS; in viral factories. Interacts with the inner capsid proteins lambda-1 and sigma-2, and outer capsid protein lambda-2; in viral factories. The N-terminus is blocked.

It is found in the host cytoplasm. In terms of biological role, non-structural protein implicated with protein sigma-NS in forming the matrix of viral factories, which are large inclusions in the host cytoplasm where replication intermediates are assembled and viral RNA replication takes place. Together with mu-2, recruits the other core proteins to these factories. Binds RNA and recruits viral mRNAs to sites of viral replication. The polypeptide is Protein mu-NS (M3) (Reovirus type 3 (strain Dearing) (T3D)).